The sequence spans 141 residues: Mu-like prophage FluMu protein gp36 (141 aa).

To phage Mu protein gp36.

The polypeptide is Mu-like prophage FluMu protein gp36 (Haemophilus influenzae (strain ATCC 51907 / DSM 11121 / KW20 / Rd)).